The chain runs to 130 residues: Phosphoribosyl-AMP cyclohydrolase (130 aa).

Asp-78 contacts Mg(2+). Cys-79 is a binding site for Zn(2+). 2 residues coordinate Mg(2+): Asp-80 and Asp-82. Cys-96 and Cys-103 together coordinate Zn(2+).

Belongs to the PRA-CH family. In terms of assembly, homodimer. Requires Mg(2+) as cofactor. Zn(2+) is required as a cofactor.

The protein localises to the cytoplasm. The catalysed reaction is 1-(5-phospho-beta-D-ribosyl)-5'-AMP + H2O = 1-(5-phospho-beta-D-ribosyl)-5-[(5-phospho-beta-D-ribosylamino)methylideneamino]imidazole-4-carboxamide. Its pathway is amino-acid biosynthesis; L-histidine biosynthesis; L-histidine from 5-phospho-alpha-D-ribose 1-diphosphate: step 3/9. Catalyzes the hydrolysis of the adenine ring of phosphoribosyl-AMP. The sequence is that of Phosphoribosyl-AMP cyclohydrolase from Methylobacillus flagellatus (strain ATCC 51484 / DSM 6875 / VKM B-1610 / KT).